The chain runs to 207 residues: Alpha-1-acid glycoprotein 1 (207 aa).

The N-terminal stretch at 1–18 (MALHTVLIILSLLPMLEA) is a signal peptide. Pyrrolidone carboxylic acid is present on Gln19. Asn25, Asn34, Asn76, Asn94, and Asn104 each carry an N-linked (GlcNAc...) asparagine glycan. A disulfide bridge links Cys91 with Cys184.

Belongs to the calycin superfamily. Lipocalin family.

Its subcellular location is the secreted. Functionally, functions as a transport protein in the blood stream. Binds various ligands in the interior of its beta-barrel domain. Appears to function in modulating the activity of the immune system during the acute-phase reaction. This is Alpha-1-acid glycoprotein 1 (Orm1) from Mus musculus (Mouse).